Consider the following 118-residue polypeptide: Holo-[acyl-carrier-protein] synthase (118 aa).

Asp-8 and Glu-58 together coordinate Mg(2+).

Belongs to the P-Pant transferase superfamily. AcpS family. Mg(2+) is required as a cofactor.

Its subcellular location is the cytoplasm. The enzyme catalyses apo-[ACP] + CoA = holo-[ACP] + adenosine 3',5'-bisphosphate + H(+). In terms of biological role, transfers the 4'-phosphopantetheine moiety from coenzyme A to a Ser of acyl-carrier-protein. The protein is Holo-[acyl-carrier-protein] synthase of Streptococcus equi subsp. zooepidemicus (strain MGCS10565).